A 297-amino-acid polypeptide reads, in one-letter code: Probable porphobilinogen deaminase (297 aa).

Cys241 carries the post-translational modification S-(dipyrrolylmethanemethyl)cysteine.

It belongs to the HMBS family. Requires dipyrromethane as cofactor.

It catalyses the reaction 4 porphobilinogen + H2O = hydroxymethylbilane + 4 NH4(+). It participates in porphyrin-containing compound metabolism; protoporphyrin-IX biosynthesis; coproporphyrinogen-III from 5-aminolevulinate: step 2/4. Its function is as follows. Tetrapolymerization of the monopyrrole PBG into the hydroxymethylbilane pre-uroporphyrinogen in several discrete steps. This is Probable porphobilinogen deaminase from Pyrobaculum arsenaticum (strain DSM 13514 / JCM 11321 / PZ6).